A 2348-amino-acid chain; its full sequence is Transcription factor HIVEP3 (2348 aa).

The segment at 1–105 (MDPDQSIKGT…AFMSPGKPEH (105 aa)) is disordered. Positions 27-72 (IQTSVSSSAPYPGSGTTAPSESATQELLATQPFSGPSQEKTGQQQK) are enriched in polar residues. 2 consecutive C2H2-type zinc fingers follow at residues 185–207 (YICQYCSRPCAKPSVLQKHIRSH) and 213–235 (YPCGPCGFSFKTKSNLYKHRKSH). Residues 185 to 235 (YICQYCSRPCAKPSVLQKHIRSHTGERPYPCGPCGFSFKTKSNLYKHRKSH) are ZAS1. Positions 204-1055 (IRSHTGERPY…KGKQESSEEP (852 aa)) are no DNA binding activity or transactivation activity, but complete prevention of TRAF-dependent NF-Kappa-B activation; associates with TRAF2 and JUN. Disordered regions lie at residues 239–401 (IKAG…SPPN), 475–532 (DSVK…PLLR), and 561–628 (ADPE…TKKG). An acidic 1 region spans residues 257-280 (EMERIPGEEFEEPTEGESTDSEEE). Residues 264–281 (EEFEEPTEGESTDSEEET) show a composition bias toward acidic residues. Positions 298-323 (PLLSSSLYSSGSHGSSQERCSLSQSS) are enriched in low complexity. The span at 338-352 (SSEHPLSHKPEDTHT) shows a compositional bias: basic and acidic residues. 2 stretches are compositionally biased toward polar residues: residues 372-401 (TFLSPGSKGSTESGYFSRSESAEQQVSPPN) and 485-495 (TRRSSVESPKS). Low complexity-rich tracts occupy residues 513 to 527 (QSLLSLQHPPSSTHP) and 589 to 605 (PLGGEYSSEEPGPSSKD). Residues 606 to 623 (PTSKPSDEPEPKESDLTK) show a composition bias toward basic and acidic residues. Residues 633–663 (GANYECTICGARYKKRDNYEAHKKYYCSELQ) form a CCHC HIVEP-type zinc finger. 5 disordered regions span residues 692 to 1098 (KLGA…PPYT), 1229 to 1274 (LPPV…TSAP), 1386 to 1427 (EGCS…KADE), 1441 to 1555 (STED…EGTD), and 1654 to 1694 (EVHL…GEPA). Over residues 736–749 (STKSPAEASKSAPS) the composition is skewed to low complexity. Residues 844 to 865 (EEPDRPDTEPEPPPKEPEKTEE) form an acidic 2 region. Residues 845–865 (EPDRPDTEPEPPPKEPEKTEE) are compositionally biased toward basic and acidic residues. A Nuclear localization signal motif is present at residues 885–891 (PKKKRLR). Positions 893–929 (AEMAQSSGESSFESSVPLSRSPSQESSISLSGSSRSA) are enriched in low complexity. Residues 930–939 (SFDREDHGKA) show a composition bias toward basic and acidic residues. 3 stretches are compositionally biased toward polar residues: residues 975–985 (SEQSPNVPHSS), 1062–1073 (TKSSVPQISVGT), and 1247–1256 (SSSTEYSSDI). A coiled-coil region spans residues 1409 to 1433 (METQQQKRVKEEEASKADEKLELVS). 3 stretches are compositionally biased toward basic and acidic residues: residues 1416-1427 (RVKEEEASKADE), 1442-1452 (TEDRKKTEKPH), and 1518-1527 (VKKEDPKEQT). Low complexity predominate over residues 1538-1547 (LPLSDTSPKP). Residues 1665-1694 (SQKDPARVEKEEKQGKAEEGTPTSKRGEPA) are compositionally biased toward basic and acidic residues. 2 C2H2-type zinc fingers span residues 1720–1742 (YVCEECGIRCKKPSMLKKHIRTH) and 1748–1772 (YVCKHCHFAFKTKGNLTKHMKSKAH). The interval 1720 to 1772 (YVCEECGIRCKKPSMLKKHIRTHTDVRPYVCKHCHFAFKTKGNLTKHMKSKAH) is ZAS2. The acidic 3 stretch occupies residues 1783 to 1841 (EELEAEEGTSDDLHQDSEGQEGAEAVEEHQFSDLEDSDSDSDLDEDEEEEEEEEESQDE). Disordered stretches follow at residues 1786 to 1990 (EAEE…HLCG) and 2009 to 2038 (PAGLERATDTGTPRYSPTRRWSLGQAESPP). Over residues 1815 to 1840 (DLEDSDSDSDLDEDEEEEEEEEESQD) the composition is skewed to acidic residues. The segment covering 1871–1902 (PDSTSDEVPQGSSISEATHLTASSCSTPSRGT) has biased composition (polar residues). Repeat copies occupy residues 1897–1900 (TPSR), 1927–1930 (SPRR), 1933–1936 (SPSK), 1961–1964 (SPAR), and 2024–2027 (SPTR). Polar residues predominate over residues 1952 to 1961 (KNDSSPQQCS). Positions 2053–2148 (SPSADKSGLG…QLLSRAPCPL (96 aa)) are 5 X 4 AA tandem repeats of [ST]-P-X-[RK]. Disordered regions lie at residues 2184–2265 (SDLT…QGHQ) and 2284–2348 (KASS…PPSI). The span at 2203-2216 (SPSASVSPVAKVSK) shows a compositional bias: low complexity. Residues 2293 to 2314 (RSSSMDCLAETSTYSPPRSRNL) show a composition bias toward polar residues.

In terms of assembly, interacts with TRAF1 and TRAF2 as well as with JUN. Forms a multimeric complex with RUNX2 and E3 ubiquitin ligase WWP1. Phosphorylated on threonine and serine residues. Phosphorylation by cyclin-dependent kinase CDK1 decreases HIVEP3 DNA binding affinity, and by epidermal growth factor receptor kinase increases its DNA binding affinity. In terms of tissue distribution, expressed in macrophages, lymphocytes, brain, thymus, spleen and bone marrow. Expressed in osteoblasts, whole bone and, to a lesser extent, in osteoclasts.

The protein resides in the cytoplasm. It localises to the nucleus. Plays a role of transcription factor; binds to recognition signal sequences (Rss heptamer) for somatic recombination of immunoglobulin and T-cell receptor gene segments; Also binds to the kappa-B motif of gene such as S100A4, involved in cell progression and differentiation. Kappa-B motif is a gene regulatory element found in promoters and enhancers of genes involved in immunity, inflammation, and growth and that responds to viral antigens, mitogens, and cytokines. Involvement of HIVEP3 in cell growth is strengthened by the fact that its down-regulation promotes cell cycle progression with ultimate formation of multinucleated giant cells. Strongly inhibits TNF-alpha-induced NF-kappa-B activation; Interferes with nuclear factor NF-kappa-B by several mechanisms: as transcription factor, by competing for Kappa-B motif and by repressing transcription in the nucleus; through a non transcriptional process, by inhibiting nuclear translocation of RELA by association with TRAF2, an adapter molecule in the tumor necrosis factor signaling, which blocks the formation of IKK complex. Interaction with TRAF proteins inhibits both NF-Kappa-B-mediated and c-Jun N-terminal kinase/JNK-mediated responses that include apoptosis and pro-inflammatory cytokine gene expression. Positively regulates the expression of IL2 in T-cell. Essential regulator of adult bone formation. This is Transcription factor HIVEP3 (Hivep3) from Mus musculus (Mouse).